A 63-amino-acid polypeptide reads, in one-letter code: ATP synthase membrane subunit K, mitochondrial (63 aa).

The helical transmembrane segment at 15 to 37 threads the bilayer; sequence TMRGRANVAKATWASLGLVYVLV.

In terms of assembly, F-type ATPases have 2 components, CF(1) - the catalytic core - and CF(0) - the membrane proton channel. CF(1) has five subunits: alpha(3), beta(3), gamma(1), delta(1), epsilon(1). CF(0) has three main subunits: a, b and c. The ATP synthase complex/complex V exists as a monomeric and a dimeric supercomplex that helps shape mitochondrial cristae to optimize proton flow.

The protein localises to the mitochondrion membrane. Its function is as follows. Mitochondrial membrane ATP synthase (F(1)F(0) ATP synthase or Complex V) produces ATP from ADP in the presence of a proton gradient across the membrane which is generated by electron transport complexes of the respiratory chain. F-type ATPases consist of two structural domains, F(1) - containing the extramembraneous catalytic core and F(0) - containing the membrane proton channel, linked together by a central stalk and a peripheral stalk. During catalysis, ATP synthesis in the catalytic domain of F(1) is coupled via a rotary mechanism of the central stalk subunits to proton translocation. ATP5MK is a minor subunit of the mitochondrial membrane ATP synthase required for dimerization of the ATP synthase complex and as such regulates ATP synthesis in the mitochondria. The polypeptide is ATP synthase membrane subunit K, mitochondrial (Drosophila melanogaster (Fruit fly)).